The chain runs to 586 residues: Ezrin (586 aa).

In terms of domain architecture, FERM spans P2–R295. K60 carries the post-translational modification N6-acetyllysine. The [IL]-x-C-x-x-[DE] motif signature appears at I115–E120. Phosphotyrosine; by PDGFR is present on Y146. An interaction with SCYL3 region spans residues E244–M586. The stretch at V302 to E462 forms a coiled coil. A disordered region spans residues K306–E338. Residues Q308–E338 show a composition bias toward basic and acidic residues. At Y354 the chain carries Phosphotyrosine; by PDGFR. A Phosphoserine modification is found at S366. Phosphotyrosine is present on Y478. The interval L534–Y565 is disordered. S535 bears the Phosphoserine mark. Basic and acidic residues predominate over residues Q540 to Y565. T567 is modified (phosphothreonine; by ROCK2 and PKC/PRKCI).

Interacts with PALS1 and NHERF2. Found in a complex with EZR, PODXL and NHERF2. Interacts with MCC, PLEKHG6, PODXL, SCYL3/PACE1, NHERF1 and TMEM8B. Interacts (when phosphorylated) with FES/FPS. Interacts with dimeric S100P, the interaction may be activating through unmasking of F-actin binding sites. Identified in complexes that contain VIM, EZR, AHNAK, BFSP1, BFSP2, ANK2, PLEC, PRX and spectrin. Detected in a complex composed of at least EZR, AHNAK, PPL and PRX. Interacts with PDPN (via cytoplasmic domain); activates RHOA and promotes epithelial-mesenchymal transition. Interacts with SPN/CD43 cytoplasmic tail. Interacts with CD44 and ICAM2. Interacts with SLC9A3; interaction targets SLC9A3 to the apical membrane. Interacts with SLC9A1; regulates interactions of SLC9A1 with cytoskeletal and promotes stress fiber formation. Interacts with CLIC5; may work together in a complex which also includes RDX and MYO6 to stabilize linkages between the plasma membrane and subjacent actin cytoskeleton at the base of stereocilia. Phosphorylated by tyrosine-protein kinases. Phosphorylation by ROCK2 suppresses the head-to-tail association of the N-terminal and C-terminal halves resulting in an opened conformation which is capable of actin and membrane-binding. In terms of processing, S-nitrosylation is induced by interferon-gamma and oxidatively-modified low-densitity lipoprotein (LDL(ox)) possibly implicating the iNOS-S100A8/9 transnitrosylase complex. In terms of tissue distribution, detected in eye lens fiber cells. Expressed in cerebrum and cerebellum (at protein level). Component of the microvilli of intestinal epithelial cells.

Its subcellular location is the apical cell membrane. It localises to the cell projection. The protein resides in the microvillus membrane. It is found in the ruffle membrane. The protein localises to the cytoplasm. Its subcellular location is the cell cortex. It localises to the cytoskeleton. The protein resides in the microvillus. With respect to regulation, a head-to-tail association, of the N-terminal and C-terminal halves results in a closed conformation (inactive form) which is incapable of actin or membrane-binding. Functionally, probably involved in connections of major cytoskeletal structures to the plasma membrane. In epithelial cells, required for the formation of microvilli and membrane ruffles on the apical pole. Along with PLEKHG6, required for normal macropinocytosis. This chain is Ezrin (Ezr), found in Mus musculus (Mouse).